Here is a 310-residue protein sequence, read N- to C-terminus: Serine/threonine-protein kinase pim-2 (310 aa).

Residues 30–290 form the Protein kinase domain; the sequence is YTMGNLLGSG…LEQILQHPWM (261 aa). ATP-binding positions include 36–44 and lysine 59; that span reads LGSGGFGSV. Aspartate 167 (proton acceptor) is an active-site residue.

This sequence belongs to the protein kinase superfamily. CAMK Ser/Thr protein kinase family. PIM subfamily. Autophosphorylated.

It catalyses the reaction L-seryl-[protein] + ATP = O-phospho-L-seryl-[protein] + ADP + H(+). The catalysed reaction is L-threonyl-[protein] + ATP = O-phospho-L-threonyl-[protein] + ADP + H(+). Proto-oncogene with serine/threonine kinase activity involved in cell survival and cell proliferation. In Danio rerio (Zebrafish), this protein is Serine/threonine-protein kinase pim-2 (pim2).